We begin with the raw amino-acid sequence, 573 residues long: Sulfite reductase [NADPH] hemoprotein beta-component (573 aa).

Positions 438, 444, 483, and 487 each coordinate [4Fe-4S] cluster. Siroheme is bound at residue C487.

This sequence belongs to the nitrite and sulfite reductase 4Fe-4S domain family. As to quaternary structure, alpha(8)-beta(8). The alpha component is a flavoprotein, the beta component is a hemoprotein. The cofactor is siroheme. [4Fe-4S] cluster is required as a cofactor.

The catalysed reaction is hydrogen sulfide + 3 NADP(+) + 3 H2O = sulfite + 3 NADPH + 4 H(+). It participates in sulfur metabolism; hydrogen sulfide biosynthesis; hydrogen sulfide from sulfite (NADPH route): step 1/1. In terms of biological role, component of the sulfite reductase complex that catalyzes the 6-electron reduction of sulfite to sulfide. This is one of several activities required for the biosynthesis of L-cysteine from sulfate. The sequence is that of Sulfite reductase [NADPH] hemoprotein beta-component from Nitrosomonas europaea (strain ATCC 19718 / CIP 103999 / KCTC 2705 / NBRC 14298).